A 628-amino-acid polypeptide reads, in one-letter code: MSLGCITPLASAMVGPKLVRPLIHHNPLFHHKPLNRPYLQTKIPLRSRVAQNPINMALITTDEGITRRIGNHHPNLWDDDFIQSLSKAYEAPSYGERAEKLIKDVRDMFNALPLHSSSADDLIQHLSLVDSVERLGIDRHFQNEIKTALDYVYRYWSDAGIGCGRESTHADLNTTALGFRILRLHRYSVSSDVLQQFVLRDGPFLDSNNQPNEDDIKNILNLFRGSLIAFPGENVLDDAKSFTMTYLKQVLPKISNLNLSREIKFNLEYGWHTNVPRLEARTYIDIYGEDSSWASKSINNIFYTKLLELAKLDFNIIQSLQQQELQILSRWWMESDLGKLDFARHRHVEYYLWAATGCIEPKYSAFRIGFAKLSALVTYLDDMYDTYDFDEIKIFTKAIKRWDASIIKGLPEFMKVAFKAFDEAVKDMAQEAKKTQGRDTLDYARKAWEVYIDAYMKEAEWLATGYMPSLEEYLENGKVSAGSRVVTLQPILSLDVPLSDDILKEIDYPSRFDELLCLTLRLRGDTRTFKAEADRGEVVSCITCYMKDHPGSNEEDALNYLNSLIDERLKELNWEYLKTDNVPIISKGNAYNLSKGLQLLYKERDGFTVFSIETKNFIYRMMIGSIPI.

Residues 1–46 constitute a chloroplast transit peptide; sequence MSLGCITPLASAMVGPKLVRPLIHHNPLFHHKPLNRPYLQTKIPLR. Mg(2+)-binding residues include Asp-381, Asp-385, and Glu-532. Residues 381–385 carry the DDXXD motif motif; it reads DDMYD.

Belongs to the terpene synthase family. Tpsa subfamily. Mg(2+) serves as cofactor. Mn(2+) is required as a cofactor.

It localises to the plastid. Its subcellular location is the chloroplast. The enzyme catalyses (2E)-geranyl diphosphate = alpha-pinene + diphosphate. Its pathway is secondary metabolite biosynthesis; terpenoid biosynthesis. Its function is as follows. Monoterpene synthase involved in the biosynthesis of volatile compounds. Mediates the conversion of (2E)-geranyl diphosphate (GPP) into alpha-pinene. In Chamaecyparis formosensis (Formosan cypress), this protein is Alpha pinene synthase, chloroplastic.